The primary structure comprises 116 residues: Nitrogenase iron-iron protein delta chain (116 aa).

Hexamer of two alpha, two beta, and two delta chains. Requires iron-sulfur cluster as cofactor.

The catalysed reaction is N2 + 8 reduced [2Fe-2S]-[ferredoxin] + 16 ATP + 16 H2O = H2 + 8 oxidized [2Fe-2S]-[ferredoxin] + 2 NH4(+) + 16 ADP + 16 phosphate + 6 H(+). In terms of biological role, the key enzymatic reactions in nitrogen fixation are catalyzed by the nitrogenase complex, which has 2 components: the iron protein (component 2) and a component 1 which is either a molybdenum-iron protein, a vanadium-iron, or an iron-iron protein. This is Nitrogenase iron-iron protein delta chain (anfG) from Clostridium pasteurianum.